The primary structure comprises 158 residues: Cyclic pyranopterin monophosphate synthase (158 aa).

Substrate contacts are provided by residues 75-77 (LCH) and 113-114 (ME). The active site involves Asp-128.

The protein belongs to the MoaC family. In terms of assembly, homohexamer; trimer of dimers.

It catalyses the reaction (8S)-3',8-cyclo-7,8-dihydroguanosine 5'-triphosphate = cyclic pyranopterin phosphate + diphosphate. Its pathway is cofactor biosynthesis; molybdopterin biosynthesis. In terms of biological role, catalyzes the conversion of (8S)-3',8-cyclo-7,8-dihydroguanosine 5'-triphosphate to cyclic pyranopterin monophosphate (cPMP). This Roseiflexus sp. (strain RS-1) protein is Cyclic pyranopterin monophosphate synthase.